Consider the following 515-residue polypeptide: Maturase K (515 aa).

It belongs to the intron maturase 2 family. MatK subfamily.

It localises to the plastid. The protein resides in the chloroplast. Its function is as follows. Usually encoded in the trnK tRNA gene intron. Probably assists in splicing its own and other chloroplast group II introns. In Pinus densiflora (Japanese red pine), this protein is Maturase K.